The following is a 236-amino-acid chain: MEKEKLLYEGKAKKLYFTDDSEVLWVEYCDQATALNGARKEQITGKGALNNQITSLIFEKLNAEGLETHFIEKLSKTEQLNRKVSIIPLEVVLRNVVAGSFAKRFGLEEGIVLQEPIVEFYYKDDALDDPFINDEHVRFLNIATYSEIEFLKSETRKINEILKKIWAEIGLTLVDFKLEFGRLADGRIILADEISPDTSRLWDANGQHMDKDVFRRNIGDLVETYTEVLNLLENAK.

Belongs to the SAICAR synthetase family.

It catalyses the reaction 5-amino-1-(5-phospho-D-ribosyl)imidazole-4-carboxylate + L-aspartate + ATP = (2S)-2-[5-amino-1-(5-phospho-beta-D-ribosyl)imidazole-4-carboxamido]succinate + ADP + phosphate + 2 H(+). The protein operates within purine metabolism; IMP biosynthesis via de novo pathway; 5-amino-1-(5-phospho-D-ribosyl)imidazole-4-carboxamide from 5-amino-1-(5-phospho-D-ribosyl)imidazole-4-carboxylate: step 1/2. This is Phosphoribosylaminoimidazole-succinocarboxamide synthase (purC) from Lactococcus lactis subsp. lactis (strain IL1403) (Streptococcus lactis).